Here is a 346-residue protein sequence, read N- to C-terminus: Protein RecA (346 aa).

Residue 68-75 participates in ATP binding; that stretch reads GPESSGKT.

This sequence belongs to the RecA family.

The protein resides in the cytoplasm. Can catalyze the hydrolysis of ATP in the presence of single-stranded DNA, the ATP-dependent uptake of single-stranded DNA by duplex DNA, and the ATP-dependent hybridization of homologous single-stranded DNAs. It interacts with LexA causing its activation and leading to its autocatalytic cleavage. This chain is Protein RecA, found in Heliobacterium modesticaldum (strain ATCC 51547 / Ice1).